A 255-amino-acid chain; its full sequence is tRNA (guanine-N(7)-)-methyltransferase (255 aa).

Residues Glu-64, Glu-89, Asp-116, and Asp-138 each coordinate S-adenosyl-L-methionine. Asp-138 is an active-site residue. Substrate-binding positions include Lys-142, Asp-174, and 212–215 (TRYE).

The protein belongs to the class I-like SAM-binding methyltransferase superfamily. TrmB family.

The enzyme catalyses guanosine(46) in tRNA + S-adenosyl-L-methionine = N(7)-methylguanosine(46) in tRNA + S-adenosyl-L-homocysteine. The protein operates within tRNA modification; N(7)-methylguanine-tRNA biosynthesis. In terms of biological role, catalyzes the formation of N(7)-methylguanine at position 46 (m7G46) in tRNA. The protein is tRNA (guanine-N(7)-)-methyltransferase of Rhodospirillum rubrum (strain ATCC 11170 / ATH 1.1.1 / DSM 467 / LMG 4362 / NCIMB 8255 / S1).